A 264-amino-acid polypeptide reads, in one-letter code: Fibroblast growth factor 5 (264 aa).

Positions 1–20 (MSLSLLFLIFCSHLIHSAWA) are cleaved as a signal peptide. Residues 25–81 (RLTPEGQPAPPRNPGDSSGSRGRSSATFSSSSASSPVAASPGSQGSGSEHSSFQWSP) are disordered. Positions 38–72 (PGDSSGSRGRSSATFSSSSASSPVAASPGSQGSGS) are enriched in low complexity. An N-linked (GlcNAc...) asparagine glycan is attached at Asn108. The disordered stretch occupies residues 227–254 (FTVTVPEKKKPPVKPKVPLSQPRRSPSP).

The protein belongs to the heparin-binding growth factors family. Interacts with FGFR1 and FGFR2. Affinity between fibroblast growth factors (FGFs) and their receptors is increased by heparan sulfate glycosaminoglycans that function as coreceptors.

The protein localises to the secreted. In terms of biological role, plays an important role in the regulation of cell proliferation and cell differentiation. Required for normal regulation of the hair growth cycle. Functions as an inhibitor of hair elongation by promoting progression from anagen, the growth phase of the hair follicle, into catagen the apoptosis-induced regression phase. This is Fibroblast growth factor 5 (Fgf5) from Mus musculus (Mouse).